Here is a 279-residue protein sequence, read N- to C-terminus: Large ribosomal subunit protein uL2 (279 aa).

Residues 202-279 form a disordered region; that stretch reads NASIGKAGRS…TSRHKSKKKG (78 aa). The segment covering 209–220 has biased composition (basic residues); the sequence is GRSRWLGRRPHN.

This sequence belongs to the universal ribosomal protein uL2 family. Part of the 50S ribosomal subunit. Forms a bridge to the 30S subunit in the 70S ribosome.

One of the primary rRNA binding proteins. Required for association of the 30S and 50S subunits to form the 70S ribosome, for tRNA binding and peptide bond formation. It has been suggested to have peptidyltransferase activity; this is somewhat controversial. Makes several contacts with the 16S rRNA in the 70S ribosome. The sequence is that of Large ribosomal subunit protein uL2 from Methylocella silvestris (strain DSM 15510 / CIP 108128 / LMG 27833 / NCIMB 13906 / BL2).